A 638-amino-acid chain; its full sequence is Threonine--tRNA ligase (638 aa).

The TGS domain occupies 1–61; sequence MPIITLPDGT…DYDAEIKIIT (61 aa). The interval 242 to 533 is catalytic; sequence DHRKIGKKMD…LIENYAGNFP (292 aa). The Zn(2+) site is built by cysteine 333, histidine 384, and histidine 510.

The protein belongs to the class-II aminoacyl-tRNA synthetase family. As to quaternary structure, homodimer. The cofactor is Zn(2+).

The protein resides in the cytoplasm. The catalysed reaction is tRNA(Thr) + L-threonine + ATP = L-threonyl-tRNA(Thr) + AMP + diphosphate + H(+). Its function is as follows. Catalyzes the attachment of threonine to tRNA(Thr) in a two-step reaction: L-threonine is first activated by ATP to form Thr-AMP and then transferred to the acceptor end of tRNA(Thr). Also edits incorrectly charged L-seryl-tRNA(Thr). This Prochlorococcus marinus (strain MIT 9211) protein is Threonine--tRNA ligase.